The sequence spans 930 residues: Translation initiation factor IF-2 (930 aa).

Positions 50–67 are enriched in low complexity; sequence FKPAAAPKVEAKPAAPKV. Disordered regions lie at residues 50 to 217 and 260 to 346; these read FKPA…SSEE and EVVP…HELP. 2 stretches are compositionally biased toward basic and acidic residues: residues 68–90 and 110–125; these read SAEK…EAKP and FKAE…AERR. Residues 129–141 are compositionally biased toward low complexity; sequence KGNNRDQQQNGNR. 2 stretches are compositionally biased toward basic and acidic residues: residues 157–167 and 262–295; these read RDNRRFNDQAK and VPEK…DGPR. Residues 309 to 318 are compositionally biased toward low complexity; sequence NQKNSNWNNN. A compositionally biased stretch (basic and acidic residues) spans 337 to 346; that stretch reads VTERKFHELP. One can recognise a tr-type G domain in the interval 432 to 599; sequence ERPPVVTIMG…TVLLVAEIQE (168 aa). Residues 441–448 form a G1 region; the sequence is GHVDHGKT. 441 to 448 contacts GTP; it reads GHVDHGKT. Residues 466–470 are G2; that stretch reads GITQH. The G3 stretch occupies residues 487–490; sequence DTPG. GTP-binding positions include 487–491 and 541–544; these read DTPGH and NKID. A G4 region spans residues 541–544; the sequence is NKID. The tract at residues 577-579 is G5; that stretch reads SAK.

The protein belongs to the TRAFAC class translation factor GTPase superfamily. Classic translation factor GTPase family. IF-2 subfamily.

It localises to the cytoplasm. Functionally, one of the essential components for the initiation of protein synthesis. Protects formylmethionyl-tRNA from spontaneous hydrolysis and promotes its binding to the 30S ribosomal subunits. Also involved in the hydrolysis of GTP during the formation of the 70S ribosomal complex. The sequence is that of Translation initiation factor IF-2 from Streptococcus pneumoniae (strain CGSP14).